Here is a 374-residue protein sequence, read N- to C-terminus: MTDALQIPRDLLPADGRFGAGPSKIQTAHLDALAATGSTLMGTSHRQAPVRDLVGRVRSGLAELFSLPDGYQVVLGNGGATAFWDIATYGLIQERSQHLTFGEFSSKFAKAAKAAPWLADPSVIASEPGSRPAPVAEDGVDAYAWAHNETSTAVMAPVVRPAGTSSDSSLVLVDATSGAGGLPVDLREVDVYYFAPQKCFASDGGLWIALFSPAALERAATVAASGRHIPAFFDLPTAIDNSAKNQTYNTPAVATLFLMAEQLDWMNASGGLDGMVARTTESSDTLYTWAEKSPYAFPYVTDPDHRSLVIGTIDFEDGIDAARVAAVLRANGVVDTEPYRKLGRNQLRIAMYPAVDPADVEALTRSIDWVVDHL.

Arg-46 lines the L-glutamate pocket. Pyridoxal 5'-phosphate is bound by residues 80 to 81, Phe-104, Thr-150, Asp-174, and Gln-197; that span reads AT. Lys-198 is subject to N6-(pyridoxal phosphate)lysine. 249 to 250 serves as a coordination point for pyridoxal 5'-phosphate; it reads NT.

It belongs to the class-V pyridoxal-phosphate-dependent aminotransferase family. SerC subfamily. As to quaternary structure, homodimer. The cofactor is pyridoxal 5'-phosphate.

It is found in the cytoplasm. The enzyme catalyses O-phospho-L-serine + 2-oxoglutarate = 3-phosphooxypyruvate + L-glutamate. It carries out the reaction 4-(phosphooxy)-L-threonine + 2-oxoglutarate = (R)-3-hydroxy-2-oxo-4-phosphooxybutanoate + L-glutamate. The protein operates within amino-acid biosynthesis; L-serine biosynthesis; L-serine from 3-phospho-D-glycerate: step 2/3. Its pathway is cofactor biosynthesis; pyridoxine 5'-phosphate biosynthesis; pyridoxine 5'-phosphate from D-erythrose 4-phosphate: step 3/5. Functionally, catalyzes the reversible conversion of 3-phosphohydroxypyruvate to phosphoserine and of 3-hydroxy-2-oxo-4-phosphonooxybutanoate to phosphohydroxythreonine. The chain is Phosphoserine aminotransferase from Nocardioides sp. (strain ATCC BAA-499 / JS614).